Reading from the N-terminus, the 1010-residue chain is Signal peptide, CUB and EGF-like domain-containing protein 2 (1010 aa).

Positions 1–24 (MGAVWTVRLLCLFLLLLNTRQSAA) are cleaved as a signal peptide. The region spanning 28-68 (NTDQCAEGSDACHIDAICQNTPTSYKCTCKTGFKGDGKHCE) is the EGF-like 1; calcium-binding domain. Disulfide bonds link C32–C45, C39–C54, C56–C67, C73–C85, C81–C94, C96–C109, C115–C126, and C122–C135. The EGF-like 2; calcium-binding domain occupies 69–110 (DIDECDVEYNGGCVHECNNIPGNYRCTCLDGFHLAHDGHNCL). The EGF-like 3; calcium-binding domain maps to 111 to 147 (DVDECVFNNGGCQHVCVNTMGSYECRCKQGFFLSDNQ). 2 consecutive EGF-like domains span residues 160–196 (CMNK…QRGC) and 200–235 (CNHG…GRTC). N-linked (GlcNAc...) asparagine glycosylation occurs at N249. An EGF-like 6 domain is found at 269-304 (CAVNNGGCDSTCKDTSTGVRCSCPVGFTLQPDGKSC). An EGF-like 7; calcium-binding domain is found at 306–346 (DIDECELHNGGCDHYCRNTIGSFECSCRKGFKLLTDERSCQ). Disulfide bonds link C310-C321, C317-C330, C332-C345, C351-C361, C357-C370, C372-C384, C390-C401, C397-C410, and C412-C425. The EGF-like 8; calcium-binding domain occupies 347–385 (DIDECFFERTCDHTCVNSPGSFQCVCNKGYTLYGLAHCG). One can recognise an EGF-like 9; calcium-binding domain in the interval 386–426 (DINECSFNNGGCEHTCENTMGSFGCHCRAGYKLHWNKKDCI). 4 N-linked (GlcNAc...) asparagine glycosylation sites follow: N488, N703, N774, and N803. C822 and C848 form a disulfide bridge. A CUB domain is found at 822 to 934 (CGGELGEFTG…KGFQVPYVTY (113 aa)). The interval 860-869 (ILVVVPEIYL) is interaction with the cholesterol-anchor of SHH. A disulfide bond links C875 and C896. N982 carries N-linked (GlcNAc...) asparagine glycosylation.

In terms of assembly, interacts with SHH via the cholesterol anchor of the dually lipid-modified SHH (ShhNp). Interacts with PTCH1. Forms homooligomers and heterooligomers with SCUBE1 and SCUBE3. Interacts with VEGFR2. N-glycosylated.

It is found in the secreted. The protein localises to the cell surface. Functionally, lipid-binding protein required for SHH long-range signaling by binding to the dually lipid-modified SHH (ShhNp) and by promoting ShhNp mobilization, solubilization and release from the cell membrane. Acts by enhancing the proteolytic processing (shedding) of the lipid-modified N- and C- terminal of ShhNp at the cell surface. Synergizes with DISP1 to cause an increase in SHH secretion. Probable cell surface coreceptor for VEGFR2 involved in VEGFR2-mediated angiogenesis. The protein is Signal peptide, CUB and EGF-like domain-containing protein 2 (scube2) of Danio rerio (Zebrafish).